The following is a 343-amino-acid chain: MSRAGSWDMDGLRADGGGAGGAPASSSSSSVAAAAASGQCRGFLSAPVFAGTHSGRAAAAAAAAAAAAAAASGFAYPGTSERTGSSSSSSSSAVVAARPEAPPAKECPAPTPAAAAAAPPSAPALGYGYHFGNGYYSCRMSHGVGLQQNALKSSPHASLGGFPVEKYMDVSGLASSSVPANEVPARAKEVSFYQGYTSPYQHVPGYIDMVSTFGSGEPRHEAYISMEGYQSWTLANGWNSQVYCTKDQPQGSHFWKSSFPGDVALNQPDMCVYRRGRKKRVPYTKLQLKELENEYAINKFINKDKRRRISAATNLSERQVTIWFQNRRVKDKKIVSKLKDTVS.

2 disordered regions span residues 1 to 28 (MSRA…SSSS) and 78 to 115 (GTSE…PAAA). Low complexity predominate over residues 85–115 (SSSSSSSSAVVAARPEAPPAKECPAPTPAAA). The segment at residues 276 to 335 (GRKKRVPYTKLQLKELENEYAINKFINKDKRRRISAATNLSERQVTIWFQNRRVKDKKIV) is a DNA-binding region (homeobox).

The protein belongs to the Abd-B homeobox family.

Its subcellular location is the nucleus. In terms of biological role, sequence-specific transcription factor that binds gene promoters and activates their transcription. Part of a developmental regulatory system that provides cells with specific positional identities on the anterior-posterior axis. This chain is Homeobox protein Hox-D13 (HOXD13), found in Homo sapiens (Human).